The following is a 236-amino-acid chain: Orotidine 5'-phosphate decarboxylase (236 aa).

Substrate contacts are provided by residues Asp14, Lys36, 63 to 72 (DLKYHDIPNT), Thr122, Arg183, Gln192, Gly212, and Arg213. Residue Lys65 is the Proton donor of the active site.

It belongs to the OMP decarboxylase family. Type 1 subfamily. As to quaternary structure, homodimer.

It catalyses the reaction orotidine 5'-phosphate + H(+) = UMP + CO2. It participates in pyrimidine metabolism; UMP biosynthesis via de novo pathway; UMP from orotate: step 2/2. Functionally, catalyzes the decarboxylation of orotidine 5'-monophosphate (OMP) to uridine 5'-monophosphate (UMP). The sequence is that of Orotidine 5'-phosphate decarboxylase from Halorhodospira halophila (strain DSM 244 / SL1) (Ectothiorhodospira halophila (strain DSM 244 / SL1)).